The following is a 188-amino-acid chain: PRA1 family protein 3 (188 aa).

At Met-1 the chain carries N-acetylmethionine. Topologically, residues 1–35 (MDVNLAPLRAWDDFFPGSDRFARPDFRDISKWNNR) are cytoplasmic. A run of 2 helical transmembrane segments spans residues 36-56 (VVSNLLYYQTNYLVVAAMMIS) and 57-77 (VVGFLSPFNMILGGIIVVLVF). Topologically, residues 78-92 (TGFVWAAHNKDILRR) are cytoplasmic. Helical transmembrane passes span 93 to 113 (MKKQYPTAFVMVVMLASYFLI) and 115 to 135 (MFGGVMVFVFGITFPLLLMFI). A required for homodimer formation and heterodimer formation with ARL6IP1 region spans residues 103–117 (MVVMLASYFLISMFG). The Cytoplasmic segment spans residues 136 to 188 (HASLRLRNLKNKLENKMEGIGLKKTPMGIILDALEQQEDSINKFADYISKARE). Residues 136–188 (HASLRLRNLKNKLENKMEGIGLKKTPMGIILDALEQQEDSINKFADYISKARE) are targeting to endoplasmic reticulum membrane.

Belongs to the PRA1 family. As to quaternary structure, homodimer. Heterodimer with ARL6IP1. Forms multimers. Interacts with ARL6. Interacts with prenylated RAB1A and RAB3A. Interacts with SLC1A1/EAAC1. Interacts with RTN2 (via first transmembrane domain). Does not interact with VAMP1, VAMP2 or VAMP3. In terms of tissue distribution, ubiquitous. Most abundant in heart and brain. In the embryonic brain cortex, expressed in neurons and astrocytes.

It localises to the endoplasmic reticulum membrane. Its subcellular location is the cell membrane. The protein localises to the cytoplasm. It is found in the cytoskeleton. Its function is as follows. Regulates intracellular concentrations of taurine and glutamate. Negatively modulates SLC1A1/EAAC1 glutamate transport activity by decreasing its affinity for glutamate in a PKC activity-dependent manner. Plays a role in the retention of SLC1A1/EAAC1 in the endoplasmic reticulum. The polypeptide is PRA1 family protein 3 (Arl6ip5) (Rattus norvegicus (Rat)).